Reading from the N-terminus, the 391-residue chain is UDP-galactose transporter homolog 1 (391 aa).

Transmembrane regions (helical) follow at residues 3 to 23 (LLQL…WGLL), 52 to 72 (LFLN…YLLV), 126 to 147 (YILI…LRYI), 178 to 198 (YKYA…AFAP), and 207 to 227 (APES…VLDG). N-linked (GlcNAc...) asparagine glycosylation occurs at N230. 4 consecutive transmembrane segments (helical) span residues 250–270 (MMLV…TLPI), 298–318 (DIIA…ETLE), 323–343 (LTLV…SVVV), and 347–367 (ELSK…GIEA).

This sequence belongs to the nucleotide-sugar transporter family. SLC35B subfamily.

It is found in the endoplasmic reticulum membrane. Functionally, may be involved in specific transport of UDP-Gal from the cytosol to the Golgi lumen. Involved in the maintenance of optimal conditions for the folding of secretory pathway proteins in the endoplasmic reticulum. This is UDP-galactose transporter homolog 1 (HUT1) from Mycosarcoma maydis (Corn smut fungus).